A 1595-amino-acid polypeptide reads, in one-letter code: Collagen-like protein 2 (1595 aa).

2 N-linked (GlcNAc...) asparagine; by host glycosylation sites follow: N87 and N134. 4 Collagen-like domains span residues 97-155 (LRGE…NGDV), 175-233 (QVGL…KGEG), 236-295 (GSKG…KGDI), and 299-358 (GIKG…KGMK). Positions 181-190 (SQGDQGYKGD) are enriched in low complexity. Disordered regions lie at residues 181 to 577 (SQGD…SPDL) and 604 to 1326 (TDIK…GIKG). 14 stretches are compositionally biased toward basic and acidic residues: residues 191 to 200 (QGSKGDKGQK), 209 to 448 (KGDK…KGTK), 456 to 466 (YKGDIGDKGIK), 474 to 501 (DKGD…DKGY), 510 to 561 (DNGE…DKGE), 606 to 615 (IKGEKGDKGE), 622 to 702 (KGDK…DKGD), 718 to 825 (KGDK…DKGI), 832 to 883 (KGDK…KGFK), 895 to 1041 (KGDK…DKGI), 1048 to 1098 (KGNK…DQGT), 1107 to 1151 (KGDK…KGIK), 1159 to 1250 (NKGD…KGDQ), and 1265 to 1300 (KGDK…DQGI). 3 N-linked (GlcNAc...) asparagine; by host glycosylation sites follow: N274, N280, and N286. N373, N382, N400, and N409 each carry an N-linked (GlcNAc...) asparagine; by host glycan. Collagen-like domains follow at residues 380–559 (GDNG…KGDK), 608–907 (GEKG…KGEN), 920–1039 (GDKG…KGDK), 1043–1102 (GTNG…KGET), and 1128–1307 (GDQG…SGAS). N-linked (GlcNAc...) asparagine; by host glycosylation is found at N1345, N1420, and N1545. The interval 1538 to 1585 (SAFDKGGNGSIRFNPPSSGTKGSGGGGSVQGGGGTIPNDGYPGGNGGP) is disordered. Over residues 1558–1585 (KGSGGGGSVQGGGGTIPNDGYPGGNGGP) the composition is skewed to gly residues.

In terms of processing, may be hydroxylated on lysine by the viral-encoded procollagen-lysine,2-oxoglutarate 5-dioxygenase.

It is found in the virion. May participate in the formation of a layer of cross-linked glycosylated fibrils at the viral surface thus giving it a hairy-like appearance. This Acanthamoeba polyphaga (Amoeba) protein is Collagen-like protein 2.